A 180-amino-acid polypeptide reads, in one-letter code: Early nodulin-16 (180 aa).

The N-terminal stretch at 1 to 22 is a signal peptide; sequence MASSSPILLMIIFSMWLLISHS. The Phytocyanin domain occupies 25-129; the sequence is TDYLIGDSHN…GLKLAVVVQN (105 aa). Residue asparagine 67 is glycosylated (N-linked (GlcNAc...) asparagine). Cysteine 83 and cysteine 117 are oxidised to a cystine. Asparagine 152 carries an N-linked (GlcNAc...) asparagine glycan. Serine 154 carries GPI-anchor amidated serine lipidation. The propeptide at 155–180 is removed in mature form; it reads GNKGGAAGLGFIMWLGVSLVMMMFLI.

The protein belongs to the early nodulin-like (ENODL) family. As to expression, expressed in developing nodules upon symbiosis with Sinorhizobium meliloti.

The protein resides in the symbiosome. It is found in the cell membrane. Functionally, may act as a carbohydrate transporter. In Medicago truncatula (Barrel medic), this protein is Early nodulin-16.